The following is a 140-amino-acid chain: Organic hydroperoxide resistance protein-like (140 aa).

It belongs to the OsmC/Ohr family.

This Staphylococcus aureus (strain USA300) protein is Organic hydroperoxide resistance protein-like.